A 346-amino-acid chain; its full sequence is Free fatty acid receptor 3 (346 aa).

Residues 1–19 (MDTGPDQSYFSGNHWFVFS) lie on the Extracellular side of the membrane. The helical transmembrane segment at 20–40 (VYLLTFLVGLPLNLLALVVFV) threads the bilayer. Over 41-47 (GKLQRRP) the chain is Cytoplasmic. Residues 48–68 (VAVDVLLLNLTASDLLLLLFL) traverse the membrane as a helical segment. Residues 69-88 (PFRMVEAANGMHWPLPFILC) are Extracellular-facing. A disulfide bond links C88 and C169. Residues 89–111 (PLSGFIFFTTIYLTALFLAAVSI) traverse the membrane as a helical segment. Over 112–132 (ERFLSVAHPLWYKTRPRLGQA) the chain is Cytoplasmic. The chain crosses the membrane as a helical span at residues 133–153 (GLVSVACWLLASAHCSVVYVI). The Extracellular segment spans residues 154–178 (EFSGDISHSQGTNGTCYLEFRKDQL). N166 carries N-linked (GlcNAc...) asparagine glycosylation. Residues 179–199 (AILLPVRLEMAVVLFVVPLII) form a helical membrane-spanning segment. Topologically, residues 200-222 (TSYCYSRLVWILGRGGSHRRQRR) are cytoplasmic. A helical membrane pass occupies residues 223–243 (VAGLLAATLLNFLVCFGPYNV). At 244–258 (SHVVGYICGESPAWR) the chain is on the extracellular side. The chain crosses the membrane as a helical span at residues 259 to 279 (IYVTLLSTLNSCVDPFVYYFS). The Cytoplasmic portion of the chain corresponds to 280–346 (SSGFQADFHE…TGGQVACAES (67 aa)). Residues 307-330 (MELKEQKGGEEQRADRPAERKTSE) show a composition bias toward basic and acidic residues. The segment at 307-346 (MELKEQKGGEEQRADRPAERKTSEHSQGCGTGGQVACAES) is disordered.

This sequence belongs to the G-protein coupled receptor 1 family. As to expression, highest level in adipose tissue, and lower expression across all tissues tested. Expressed in sympathetic ganglia.

The protein resides in the cell membrane. Its function is as follows. G protein-coupled receptor that is activated by a major product of dietary fiber digestion, the short chain fatty acids (SCFAs), and that plays a role in the regulation of whole-body energy homeostasis and in intestinal immunity. In omnivorous mammals, the short chain fatty acids acetate, propionate and butyrate are produced primarily by the gut microbiome that metabolizes dietary fibers. SCFAs serve as a source of energy but also act as signaling molecules. That G protein-coupled receptor is probably coupled to the pertussis toxin-sensitive, G(i/o)-alpha family of G proteins. Its activation results in the formation of inositol 1,4,5-trisphosphate, the mobilization of intracellular calcium, the phosphorylation of the MAPK3/ERK1 and MAPK1/ERK2 kinases and the inhibition of intracellular cAMP accumulation. Activated by SCFAs and by beta-hydroxybutyrate, a ketone body produced by the liver upon starvation, it inhibits N-type calcium channels and modulates the activity of sympathetic neurons through a signaling cascade involving the beta and gamma subunits of its coupled G protein, phospholipase C and MAP kinases. Thereby, it may regulate energy expenditure through the control of the sympathetic nervous system that controls for instance heart rate. Upon activation by SCFAs accumulating in the intestine, it may also signal to the brain via neural circuits which in turn would regulate intestinal gluconeogenesis. May also control the production of hormones involved in whole-body energy homeostasis. May for instance, regulate blood pressure through renin secretion. May also regulate secretion of the PYY peptide by enteroendocrine cells and control gut motility, intestinal transit rate, and the harvesting of energy from SCFAs produced by gut microbiota. May also indirectly regulate the production of LEP/Leptin, a hormone acting on the CNS to inhibit food intake, in response to the presence of short-chain fatty acids in the intestine. Finally, may also play a role in glucose homeostasis. Besides its role in energy homeostasis, may play a role in intestinal immunity. May mediate the activation of the inflammatory and immune response by SCFAs in the gut, regulating the rapid production of chemokines and cytokines by intestinal epithelial cells. Among SCFAs, the fatty acids containing less than 6 carbons, the most potent activators are probably propionate, butyrate and pentanoate while acetate is a poor activator. This Homo sapiens (Human) protein is Free fatty acid receptor 3 (FFAR3).